Here is a 228-residue protein sequence, read N- to C-terminus: Probable ribosomal RNA small subunit methyltransferase A (228 aa).

6 residues coordinate S-adenosyl-L-methionine: H9, L11, G34, E55, D78, and N93.

It belongs to the class I-like SAM-binding methyltransferase superfamily. rRNA adenine N(6)-methyltransferase family. RsmA subfamily.

The protein resides in the cytoplasm. Functionally, specifically dimethylates two adjacent adenosines in the loop of a conserved hairpin near the 3'-end of 16S rRNA in the 30S particle. May play a critical role in biogenesis of 30S subunits. The polypeptide is Probable ribosomal RNA small subunit methyltransferase A (Pyrobaculum aerophilum (strain ATCC 51768 / DSM 7523 / JCM 9630 / CIP 104966 / NBRC 100827 / IM2)).